The following is a 391-amino-acid chain: Phosphoglycerate kinase (391 aa).

Residues D21–N23, R36, H59–R62, R113, and R146 contribute to the substrate site. ATP is bound by residues K197, E319, and G345 to T348.

This sequence belongs to the phosphoglycerate kinase family. In terms of assembly, monomer.

The protein localises to the cytoplasm. The catalysed reaction is (2R)-3-phosphoglycerate + ATP = (2R)-3-phospho-glyceroyl phosphate + ADP. It functions in the pathway carbohydrate degradation; glycolysis; pyruvate from D-glyceraldehyde 3-phosphate: step 2/5. The protein is Phosphoglycerate kinase of Shewanella sp. (strain MR-7).